The primary structure comprises 471 residues: Uronate isomerase (471 aa).

It belongs to the metallo-dependent hydrolases superfamily. Uronate isomerase family.

The enzyme catalyses D-glucuronate = D-fructuronate. The catalysed reaction is aldehydo-D-galacturonate = keto-D-tagaturonate. It participates in carbohydrate metabolism; pentose and glucuronate interconversion. In Xanthomonas campestris pv. campestris (strain 8004), this protein is Uronate isomerase.